Consider the following 565-residue polypeptide: Bicyclogermacrene synthase (565 aa).

Positions 317, 321, 461, and 469 each coordinate Mg(2+). The short motif at 317–321 (DDTFD) is the DDXXD motif element.

It belongs to the terpene synthase family. Mg(2+) serves as cofactor.

The enzyme catalyses (2E,6E)-farnesyl diphosphate = bicyclogermacrene + diphosphate. The protein operates within secondary metabolite biosynthesis; terpenoid biosynthesis. In terms of biological role, sesquiterpene synthase converting farnesyl diphosphate to bicyclogermacrene as the major product. In Phyla dulcis (Aztec sweet herb), this protein is Bicyclogermacrene synthase.